Here is a 346-residue protein sequence, read N- to C-terminus: MAEITAKLVKELREKSGAGVMDAKKALVETDGDMDKAVELLREKGMAKAAKKADRVAAEGLTGVYVHGNVAAVVEVNAETDFVAKNAQFVELVNATAKVIAEGKPANNDEALALVMPSGETLAEAYVNATATIGEKISFRRFALIEKTDEQHFGAYQHNGGRIGVISVVEGGDDALAKQVSMHIAAMKPTVLSYTELDAQFIKDELAQLNHAIELDNESRAMVDKPALPFLKYGSKAQLSDDVITAAEADIKAELAAEGKPEKIWDKIIPGKMDRFMLDNTKVDQAYTLLAQVYIMDDSKTVEAYLDSVNAKAIAFARFEVGEGIEKKANDFESEVAATMAAALNN.

Residues 80–83 (TDFV) are involved in Mg(2+) ion dislocation from EF-Tu.

Belongs to the EF-Ts family.

It localises to the cytoplasm. Associates with the EF-Tu.GDP complex and induces the exchange of GDP to GTP. It remains bound to the aminoacyl-tRNA.EF-Tu.GTP complex up to the GTP hydrolysis stage on the ribosome. In Streptococcus pyogenes serotype M3 (strain ATCC BAA-595 / MGAS315), this protein is Elongation factor Ts.